The chain runs to 1836 residues: Druantia protein DruE (1836 aa).

The region spanning 108–405 (SFLGEDASDL…FAQDLTGLSP (298 aa)) is the Helicase ATP-binding domain. ATP is bound at residue 121–128 (TGTGSGKT). A DEAH box motif is present at residues 347–350 (DEAH). The region spanning 1014-1199 (DCTALMPFAL…EVKVNNPKIA (186 aa)) is the Helicase C-terminal domain.

It is found in the cytoplasm. Component of antiviral defense system Druantia type I, composed of DruA, DruB, DruC, DruD and DruE. Expression of Druantia in E.coli (strain MG1655) confers resistance to phage lambda, SECphi18, SECphi27 and T4. This protein is probably a helicase. The sequence is that of Druantia protein DruE from Escherichia coli (strain UMEA 4076-1).